Reading from the N-terminus, the 106-residue chain is Urease subunit beta (106 aa).

The protein belongs to the urease beta subunit family. In terms of assembly, heterotrimer of UreA (gamma), UreB (beta) and UreC (alpha) subunits. Three heterotrimers associate to form the active enzyme.

It localises to the cytoplasm. The catalysed reaction is urea + 2 H2O + H(+) = hydrogencarbonate + 2 NH4(+). The protein operates within nitrogen metabolism; urea degradation; CO(2) and NH(3) from urea (urease route): step 1/1. This Parasynechococcus marenigrum (strain WH8102) protein is Urease subunit beta.